The primary structure comprises 483 residues: Centrosomal protein cep57l1 (483 aa).

A coiled-coil region spans residues 94 to 228; sequence EHKKVLESEK…AQVQTSLEVN (135 aa). Disordered regions lie at residues 237 to 261, 303 to 325, and 416 to 460; these read AQNSTQRKVKKKKQSKLKNSVSKEP, PQVSQKNPKTAEHKPSVLPGGSR, and KEQP…SKAS. The segment covering 243–252 has biased composition (basic residues); sequence RKVKKKKQSK. Positions 375–418 form a coiled coil; sequence EDLERELDYVVKQMEIKSDQIMKLKRHQLNVNKLKKTAKLLKEQ. Over residues 420–435 the composition is skewed to polar residues; sequence RPTSVTKLAADKQNTG.

The protein belongs to the translokin family. As to quaternary structure, interacts with clip1, mis12, ndc80 and zwint. Interacts with gamma-tubulin.

It is found in the cytoplasm. The protein localises to the cytoskeleton. It localises to the microtubule organizing center. The protein resides in the centrosome. Its subcellular location is the chromosome. It is found in the centromere. The protein localises to the kinetochore. It localises to the spindle. Functionally, required for spindle microtubule attachment to both kinetochores and centrosomes. Also functions to tether minus-ends of spindle microtubules to centrosomes. May act by forming ring-like structures around microtubules, or by serving as a cross-linker or scaffold at the attachment site. The chain is Centrosomal protein cep57l1 (cep57l1) from Xenopus tropicalis (Western clawed frog).